The sequence spans 124 residues: Small ribosomal subunit protein uS12 (124 aa).

Over residues Gly11–Lys20 the composition is skewed to basic residues. Residues Gly11–Lys30 are disordered. A 3-methylthioaspartic acid modification is found at Asp89. The disordered stretch occupies residues Glu105–Lys124. Over residues Arg111–Lys124 the composition is skewed to basic residues.

This sequence belongs to the universal ribosomal protein uS12 family. In terms of assembly, part of the 30S ribosomal subunit. Contacts proteins S8 and S17. May interact with IF1 in the 30S initiation complex.

With S4 and S5 plays an important role in translational accuracy. In terms of biological role, interacts with and stabilizes bases of the 16S rRNA that are involved in tRNA selection in the A site and with the mRNA backbone. Located at the interface of the 30S and 50S subunits, it traverses the body of the 30S subunit contacting proteins on the other side and probably holding the rRNA structure together. The combined cluster of proteins S8, S12 and S17 appears to hold together the shoulder and platform of the 30S subunit. This is Small ribosomal subunit protein uS12 from Kosmotoga olearia (strain ATCC BAA-1733 / DSM 21960 / TBF 19.5.1).